A 1435-amino-acid polypeptide reads, in one-letter code: Dicer-like protein 2 (1435 aa).

Positions 54–234 (MLSESLRQNI…LEVLEINLNA (181 aa)) constitute a Helicase ATP-binding domain. An ATP-binding site is contributed by 67-74 (MDTGSGKT). The short motif at 175-178 (DEAH) is the DEAH box element. The Helicase C-terminal domain maps to 400 to 564 (KLIDFLVLEH…ENKRALEHIQ (165 aa)). Residues 591 to 684 (ARNHLSHFCG…MPAHHHIDDE (94 aa)) enclose the Dicer dsRNA-binding fold domain. RNase III domains are found at residues 956–1099 (ANEL…IDGG) and 1141–1323 (LSEI…IDSQ). Residues Glu-1178, Asp-1309, and Glu-1312 each coordinate Mg(2+).

Belongs to the helicase family. Dicer subfamily. Mg(2+) is required as a cofactor. It depends on Mn(2+) as a cofactor.

Its function is as follows. Dicer-like endonuclease involved in cleaving double-stranded RNA in the RNA interference (RNAi) pathway. Produces 21 to 25 bp dsRNAs (siRNAs) which target the selective destruction of homologous RNAs leading to sequence-specific suppression of gene expression, called post-transcriptional gene silencing (PTGS). Part of a broad host defense response against viral infection and transposons. This chain is Dicer-like protein 2 (DCL2), found in Coccidioides immitis (strain RS) (Valley fever fungus).